We begin with the raw amino-acid sequence, 72 residues long: Sperm protein associated with the nucleus on the X chromosome N1 (72 aa).

Residues 1-40 (MEKPTSSTNGEKRKSPCDSNSKNDEMQETPNRDLVLEPSL) form a disordered region. A compositionally biased stretch (basic and acidic residues) spans 10–35 (GEKRKSPCDSNSKNDEMQETPNRDLV).

It belongs to the SPAN-X family.

The polypeptide is Sperm protein associated with the nucleus on the X chromosome N1 (SPANXN1) (Pan troglodytes (Chimpanzee)).